Consider the following 321-residue polypeptide: MELPAMALQSELKQDKFPSSDVPVKDKTKKITWVRVWNSTDIFHIILVGGLHVLCLSAPFTFSWSAFWLSLTLYAVCGVFGTTLSYHRNLTHRSFKLPKYLEYFFAYVGLHALQGDPVWWVSTHRYHHKFTDTYLDPHSPIEGFWFSHIFWLFDSKYILEECGRYENAGDLLKQSYYRFLERTFVFHVYLQAALLYMFGGFPFIVWGMAVRTVWGFHASWLVNSVCHRYGHQAWDTGDLSTNNWFIAMLTSGEGWHNNHHAFEYSARHGIEWWQIDTTWYVIKLLEYLGLATDVKVPSEVHKRKMSFKNCVQDKQFCVNDK.

2 helical membrane passes run 42 to 62 and 64 to 84; these read IFHI…PFTF and WSAF…GTTL. Fe cation is bound by residues H87, H92, H124, H127, and H128. A Histidine box-1 motif is present at residues 87–92; sequence HRNLTH. The Histidine box-2 motif lies at 124–128; it reads HRYHH. The helical transmembrane segment at 190–210 threads the bilayer; it reads LQAALLYMFGGFPFIVWGMAV. Residues H227, H256, H259, and H260 each coordinate Fe cation. A Histidine box-3 motif is present at residues 256–260; that stretch reads HNNHH.

Belongs to the fatty acid desaturase type 1 family. Requires Fe(2+) as cofactor.

The protein resides in the membrane. It carries out the reaction (11Z,14Z)-eicosadienoyl-CoA + AH2 + O2 = (5Z,11Z,14Z)-eicosatrienoyl-CoA + A + 2 H2O. It catalyses the reaction (11Z,14Z,17Z)-eicosatrienoyl-CoA + AH2 + O2 = (5Z,11Z,14Z,17Z)-eicosatetraenoyl-CoA + A + 2 H2O. Its pathway is lipid metabolism; polyunsaturated fatty acid biosynthesis. Catalyzes the desaturation of 20:2Delta(11,14) and 20:3Delta(11,14,17) to generate sciadonic acid (20:3Delta(5,11,14)) and juniperonic acid (20:4Delta(5,11,14,17)). The enzyme can also use 16:0 and 18:0 as substrates. In Anemone leveillei (Windflower), this protein is Acyl-CoA 5-desaturase AL21.